The chain runs to 425 residues: Ribulose bisphosphate carboxylase (425 aa).

Residue lysine 153 is the Proton acceptor of the active site. A substrate-binding site is contributed by lysine 155. The Mg(2+) site is built by lysine 179, aspartate 181, and glutamate 182. Position 179 is an N6-carboxylysine (lysine 179). The active-site Proton acceptor is histidine 269. Substrate is bound by residues arginine 270, histidine 302, 353 to 355 (SGG), and 375 to 378 (QAGG).

The protein belongs to the RuBisCO large chain family. Type III subfamily. Homodimer. In contrast to form I RuBisCO, the form III RuBisCO is composed solely of large subunits. Mg(2+) is required as a cofactor.

The enzyme catalyses 2 (2R)-3-phosphoglycerate + 2 H(+) = D-ribulose 1,5-bisphosphate + CO2 + H2O. It catalyses the reaction D-ribulose 1,5-bisphosphate + O2 = 2-phosphoglycolate + (2R)-3-phosphoglycerate + 2 H(+). Its activity is regulated as follows. Reversibly inhibited by O(2). Its function is as follows. Catalyzes the addition of molecular CO(2) and H(2)O to ribulose 1,5-bisphosphate (RuBP), generating two molecules of 3-phosphoglycerate (3-PGA). Functions in an archaeal AMP degradation pathway, together with AMP phosphorylase and R15P isomerase. The chain is Ribulose bisphosphate carboxylase from Methanocaldococcus jannaschii (strain ATCC 43067 / DSM 2661 / JAL-1 / JCM 10045 / NBRC 100440) (Methanococcus jannaschii).